We begin with the raw amino-acid sequence, 150 residues long: Arginine repressor (150 aa).

This sequence belongs to the ArgR family.

It localises to the cytoplasm. The protein operates within amino-acid biosynthesis; L-arginine biosynthesis [regulation]. In terms of biological role, regulates arginine biosynthesis genes. The chain is Arginine repressor from Carboxydothermus hydrogenoformans (strain ATCC BAA-161 / DSM 6008 / Z-2901).